The chain runs to 145 residues: 3-dehydroquinate dehydratase (145 aa).

Y24 (proton acceptor) is an active-site residue. Substrate-binding residues include N75, H81, and D88. H101 acts as the Proton donor in catalysis. Substrate contacts are provided by residues 102-103 (LS) and R112.

The protein belongs to the type-II 3-dehydroquinase family. Homododecamer.

The catalysed reaction is 3-dehydroquinate = 3-dehydroshikimate + H2O. The protein operates within metabolic intermediate biosynthesis; chorismate biosynthesis; chorismate from D-erythrose 4-phosphate and phosphoenolpyruvate: step 3/7. Its function is as follows. Catalyzes a trans-dehydration via an enolate intermediate. This Phenylobacterium zucineum (strain HLK1) protein is 3-dehydroquinate dehydratase.